Here is a 232-residue protein sequence, read N- to C-terminus: Phosphoglycolate phosphatase (232 aa).

Catalysis depends on D13, which acts as the Nucleophile. Mg(2+) contacts are provided by D13, D15, and D175.

The protein belongs to the HAD-like hydrolase superfamily. CbbY/CbbZ/Gph/YieH family. In terms of assembly, monomer. It depends on Mg(2+) as a cofactor. Requires chloride as cofactor.

It catalyses the reaction 2-phosphoglycolate + H2O = glycolate + phosphate. It participates in organic acid metabolism; glycolate biosynthesis; glycolate from 2-phosphoglycolate: step 1/1. Its function is as follows. Specifically catalyzes the dephosphorylation of 2-phosphoglycolate. Is involved in the dissimilation of the intracellular 2-phosphoglycolate formed during the DNA repair of 3'-phosphoglycolate ends, a major class of DNA lesions induced by oxidative stress. This chain is Phosphoglycolate phosphatase, found in Yersinia pseudotuberculosis serotype I (strain IP32953).